A 47-amino-acid polypeptide reads, in one-letter code: Defensin-like protein 1 (47 aa).

4 cysteine pairs are disulfide-bonded: cysteine 3–cysteine 47, cysteine 14–cysteine 34, cysteine 20–cysteine 41, and cysteine 24–cysteine 43.

Monomer and homodimer.

Functionally, inhibits trypsin but not chymotrypsin. The polypeptide is Defensin-like protein 1 (Vigna unguiculata (Cowpea)).